A 321-amino-acid chain; its full sequence is tRNA U34 carboxymethyltransferase (321 aa).

Residues Lys90, Trp104, Lys109, Gly129, 151-153, 180-181, Met195, Tyr199, and Arg314 contribute to the carboxy-S-adenosyl-L-methionine site; these read DPT and IE.

Belongs to the class I-like SAM-binding methyltransferase superfamily. CmoB family. As to quaternary structure, homotetramer.

The catalysed reaction is carboxy-S-adenosyl-L-methionine + 5-hydroxyuridine(34) in tRNA = 5-carboxymethoxyuridine(34) in tRNA + S-adenosyl-L-homocysteine + H(+). In terms of biological role, catalyzes carboxymethyl transfer from carboxy-S-adenosyl-L-methionine (Cx-SAM) to 5-hydroxyuridine (ho5U) to form 5-carboxymethoxyuridine (cmo5U) at position 34 in tRNAs. The sequence is that of tRNA U34 carboxymethyltransferase from Histophilus somni (strain 129Pt) (Haemophilus somnus).